Reading from the N-terminus, the 243-residue chain is Tyrosine recombinase XerD-like (243 aa).

The 72-residue stretch at 1 to 72 (MKQAIESFIQ…AVNQFLYFLY (72 aa)) folds into the Core-binding (CB) domain. A Tyr recombinase domain is found at 91–243 (SVKKKLERED…KTSMSLEKFR (153 aa)). Active-site residues include lysine 149 and arginine 210.

This sequence belongs to the 'phage' integrase family. XerD-like subfamily.

It localises to the cytoplasm. In terms of biological role, putative tyrosine recombinase. Not involved in the cutting and rejoining of the recombining DNA molecules on dif(SL) site. In Streptococcus suis (strain 98HAH33), this protein is Tyrosine recombinase XerD-like.